The chain runs to 389 residues: Succinate--CoA ligase [ADP-forming] subunit beta (389 aa).

Positions 9–236 constitute an ATP-grasp domain; it reads KELFAKHGVP…RDATDPLELK (228 aa). ATP-binding positions include Lys45, 52 to 54, Ser94, and Glu99; that span reads GRG. Asn191 and Asp205 together coordinate Mg(2+). Substrate-binding positions include Asn256 and 318–320; that span reads GIT.

It belongs to the succinate/malate CoA ligase beta subunit family. Heterotetramer of two alpha and two beta subunits. Mg(2+) is required as a cofactor.

It carries out the reaction succinate + ATP + CoA = succinyl-CoA + ADP + phosphate. It catalyses the reaction GTP + succinate + CoA = succinyl-CoA + GDP + phosphate. Its pathway is carbohydrate metabolism; tricarboxylic acid cycle; succinate from succinyl-CoA (ligase route): step 1/1. In terms of biological role, succinyl-CoA synthetase functions in the citric acid cycle (TCA), coupling the hydrolysis of succinyl-CoA to the synthesis of either ATP or GTP and thus represents the only step of substrate-level phosphorylation in the TCA. The beta subunit provides nucleotide specificity of the enzyme and binds the substrate succinate, while the binding sites for coenzyme A and phosphate are found in the alpha subunit. The chain is Succinate--CoA ligase [ADP-forming] subunit beta from Rhodococcus erythropolis (strain PR4 / NBRC 100887).